The sequence spans 104 residues: ATP-dependent Clp protease adapter protein ClpS (104 aa).

The protein belongs to the ClpS family. In terms of assembly, binds to the N-terminal domain of the chaperone ClpA.

Functionally, involved in the modulation of the specificity of the ClpAP-mediated ATP-dependent protein degradation. This Burkholderia thailandensis (strain ATCC 700388 / DSM 13276 / CCUG 48851 / CIP 106301 / E264) protein is ATP-dependent Clp protease adapter protein ClpS.